We begin with the raw amino-acid sequence, 264 residues long: Glutamate racemase (264 aa).

Substrate is bound by residues 10-11 and 42-43; these read DS and YG. Cys73 acts as the Proton donor/acceptor in catalysis. 74–75 serves as a coordination point for substrate; sequence NT. Residue Cys183 is the Proton donor/acceptor of the active site. 184 to 185 contributes to the substrate binding site; it reads TH.

This sequence belongs to the aspartate/glutamate racemases family.

The enzyme catalyses L-glutamate = D-glutamate. It functions in the pathway cell wall biogenesis; peptidoglycan biosynthesis. Provides the (R)-glutamate required for cell wall biosynthesis. The chain is Glutamate racemase from Streptococcus equi subsp. zooepidemicus (strain H70).